Consider the following 55-residue polypeptide: Large ribosomal subunit protein bL33 (55 aa).

Belongs to the bacterial ribosomal protein bL33 family.

This chain is Large ribosomal subunit protein bL33, found in Acidiphilium cryptum (strain JF-5).